A 171-amino-acid polypeptide reads, in one-letter code: Glucagon family neuropeptides (171 aa).

The N-terminal stretch at 1 to 22 is a signal peptide; sequence MYRKALLVWLLVYGIMRCTVHS. The propeptide occupies 23–76; the sequence is SPTALKYPALRLEDEVYDEDGNTLPDFAFDNNPIGIGNPASVFDDMYSFYYPAE. The segment at 145–153 is important for receptor binding; that stretch reads VKKYLAAVL. At lysine 164 the chain carries Lysine amide. A propeptide spanning residues 168–171 is cleaved from the precursor; it reads VAYL.

Belongs to the glucagon family.

The protein localises to the secreted. Its function is as follows. Primary role of GRF is to release GH from the pituitary. Functionally, PACAP is a neuropeptide involved in diverse array of physiological processes through activating the PACAP subfamily of class B1 G protein-coupled receptors: VIP receptor 1 (VIPR1), VIP receptor 2 (VIPR2), and PACAP type I receptor (ADCYAP1R1). Exerts neuroprotective and general cytoprotective effects due to anti-apoptotic, anti-inflammatory, and antioxidant actions. The sequence is that of Glucagon family neuropeptides (adcyap1) from Pelophylax ridibundus (Marsh frog).